The primary structure comprises 167 residues: C-X-C motif chemokine 15 (167 aa).

The N-terminal stretch at 1-25 (MAAQGWSMLLLAVLNLGIFVRPCDT) is a signal peptide. 2 cysteine pairs are disulfide-bonded: Cys-30/Cys-57 and Cys-32/Cys-73. Ser-157 carries the post-translational modification Phosphoserine.

Belongs to the intercrine alpha (chemokine CxC) family. Expression restricted to the lung, produced by bronchoepithelial cells and is released into the airways. Expressed at low levels in fetal lung.

The protein resides in the secreted. In terms of biological role, chemotactic for neutrophils. Involved in lung-specific neutrophil trafficking during normal and inflammatory conditions. The polypeptide is C-X-C motif chemokine 15 (Cxcl15) (Mus musculus (Mouse)).